A 2368-amino-acid polypeptide reads, in one-letter code: Voltage-dependent P/Q-type calcium channel subunit alpha-1A (2368 aa).

Topologically, residues 1 to 100 (MARFGDEMPG…KYAKKITEWP (100 aa)) are cytoplasmic. The I repeat unit spans residues 65–365 (NPIPVRQNCL…LVLGVLSGEF (301 aa)). A helical membrane pass occupies residues 101–119 (PFEYMILATIIANCIVLAL). Residues 120–138 (EQHLPDDDKTPMSERLDDT) lie on the Extracellular side of the membrane. Residues 139-156 (EPYFIGIFCFEAGIKIVA) form a helical membrane-spanning segment. The Cytoplasmic portion of the chain corresponds to 157 to 168 (LGFAFHKGSYLR). A helical transmembrane segment spans residues 169 to 184 (NGWNVMDFVVVLTGIL). The Extracellular portion of the chain corresponds to 185-192 (ATVGTEFD). A helical transmembrane segment spans residues 193 to 211 (LRTLRAVRVLRPLKLVSGI). The Cytoplasmic portion of the chain corresponds to 212–230 (PSLQVVLKSIMKAMIPLLQ). The helical transmembrane segment at 231-250 (IGLLLFFAILIFAIIGLEFY) threads the bilayer. Over 251 to 337 (MGKFHTTCFE…NSNDASGNTW (87 aa)) the chain is Extracellular. Asn285 carries N-linked (GlcNAc...) asparagine glycosylation. A Ca(2+)-binding site is contributed by Glu320. The helical transmembrane segment at 338 to 362 (NWLYFIPLIIIGSFFMLNLVLGVLS) threads the bilayer. Over 363–489 (GEFAKERERV…FYIRRMVKTQ (127 aa)) the chain is Cytoplasmic. Positions 385-402 (QQIERELNGYMEWISKAE) are binding to the beta subunit. Thr411 bears the Phosphothreonine mark. Residues Ser450 and Ser453 each carry the phosphoserine modification. One copy of the II repeat lies at 475–719 (ERRMRFYIRR…VFLAIAVDNL (245 aa)). A helical transmembrane segment spans residues 490-509 (AFYWTVLSLVALNTLCVAIV). The Extracellular segment spans residues 510–523 (HYNQPEWLSDFLYY). Residues 524–543 (AEFIFLGLFMSEMFIKMYGL) traverse the membrane as a helical segment. The Cytoplasmic segment spans residues 544–551 (GTRPYFHS). The chain crosses the membrane as a helical span at residues 552–570 (SFNCFDCGVIIGSIFEVIW). Topologically, residues 571-580 (AVIKPGTSFG) are extracellular. Residues 581–599 (ISVLRALRLLRIFKVTKYW) form a helical membrane-spanning segment. Residues 600–618 (ASLRNLVVSLLNSMKSIIS) are Cytoplasmic-facing. A helical transmembrane segment spans residues 619–638 (LLFLLFLFIVVFALLGMQLF). At 639–691 (GGQFNFDEGTPPTNFDTFPAAIMTVFQILTGEDWNEVMYDGIKSQGGVQGGMV) the chain is on the extracellular side. Glu670 is a binding site for Ca(2+). A helical membrane pass occupies residues 692 to 716 (FSIYFIVLTLFGNYTLLNVFLAIAV). The Cytoplasmic portion of the chain corresponds to 717–1190 (DNLANAQELT…TNPLRRLCHY (474 aa)). Phosphoserine occurs at positions 752 and 755. The interval 762–781 (AVKEQQKNQKPTKSVWEQRT) is disordered. Over residues 769-779 (NQKPTKSVWEQ) the composition is skewed to polar residues. The residue at position 792 (Ser792) is a Phosphoserine. Disordered regions lie at residues 823-1117 (PLVV…RKPE) and 1137-1170 (VNKN…KPMP). Composition is skewed to basic and acidic residues over residues 850 to 862 (RPRE…DARR), 871 to 924 (APGR…EGEP), and 932 to 958 (RPGD…RAAD). Ser1038, Ser1042, and Ser1051 each carry phosphoserine. Positions 1056 to 1073 (GNSTNPGPALATNPQNAA) are enriched in polar residues. The span at 1074 to 1083 (SRRTPNNPGN) shows a compositional bias: low complexity. Residues 1094-1111 (ENSLIVTNPSSTQPNSAK) show a composition bias toward polar residues. A compositionally biased stretch (acidic residues) spans 1153 to 1163 (KKEEEEADPGE). The stretch at 1182 to 1465 (NPLRRLCHYI…IFVALIIITF (284 aa)) is one III repeat. The chain crosses the membrane as a helical span at residues 1191–1214 (ILNLRYFEMCILMVIAMSSIALAA). Residues 1215 to 1231 (EDPVQPNAPRNNVLRYF) lie on the Extracellular side of the membrane. A helical transmembrane segment spans residues 1232–1251 (DYVFTGVFTFEMVIKMIDLG). Residues 1252-1258 (LVLHQGA) lie on the Cytoplasmic side of the membrane. The helical transmembrane segment at 1259–1282 (YFRDLWNILDFIVVSGALVAFAFT) threads the bilayer. Over 1283 to 1293 (GNSKGKDINTI) the chain is Extracellular. Residues 1294 to 1311 (KSLRVLRVLRPLKTIKRL) form a helical membrane-spanning segment. Topologically, residues 1312 to 1330 (PKLKAVFDCVVNSLKNVFN) are cytoplasmic. Residues 1331–1350 (ILIVYMLFMFIFAVVAVQLF) traverse the membrane as a helical segment. Residues 1351–1437 (KGKFFHCTDE…QGPSPGYRME (87 aa)) are Extracellular-facing. Glu1411 provides a ligand contact to Ca(2+). The chain crosses the membrane as a helical span at residues 1438–1462 (MSIFYVVYFVVFPFFFVNIFVALII). Residues 1463-1518 (ITFQEQGDKMMEEYSLEKNERACIDFAISAKPLTRHMPQNKQSFQYRMWQFVVSPP) lie on the Cytoplasmic side of the membrane. Residues 1502–1765 (NKQSFQYRMW…LFVAVIMDNF (264 aa)) form an IV repeat. A helical membrane pass occupies residues 1519-1537 (FEYTIMAMIALNTIVLMMK). At 1538–1551 (FYGASVAYENALRV) the chain is on the extracellular side. The chain crosses the membrane as a helical span at residues 1552–1573 (FNIVFTSLFSLECVLKVMAFGI). Residues 1574-1580 (LNYFRDA) are Cytoplasmic-facing. The chain crosses the membrane as a helical span at residues 1581 to 1600 (WNIFDFVTVLGSITDILVTE). Topologically, residues 1601–1607 (FGNNFIN) are extracellular. N-linked (GlcNAc...) asparagine glycosylation occurs at Asn1607. Residues 1608-1626 (LSFLRLFRAARLIKLLRQG) traverse the membrane as a helical segment. Over 1627-1645 (YTIRILLWTFVQSFKALPY) the chain is Cytoplasmic. Residues 1646–1665 (VCLLIAMLFFIYAIIGMQVF) traverse the membrane as a helical segment. Residues 1666 to 1737 (GNIGIDGEDE…ILTADCGNEF (72 aa)) are Extracellular-facing. Residues 1738 to 1763 (AYFYFVSFIFLCSFLMLNLFVAVIMD) form a helical membrane-spanning segment. Topologically, residues 1764–2368 (NFEYLTRDSS…AYSESEDDWC (605 aa)) are cytoplasmic. At Thr1935 the chain carries Phosphothreonine. Residues 1940-2368 (QRMEPPSPTQ…AYSESEDDWC (429 aa)) are disordered. 2 stretches are compositionally biased toward polar residues: residues 1948-1963 (TQEG…STQL) and 1981-1997 (SWVT…TGTW). Phosphoserine occurs at positions 1998, 2016, 2028, 2030, 2071, and 2091. A compositionally biased stretch (polar residues) spans 2008-2017 (PNSQPNSQSV). Residues 2018–2034 (EMREMGTDGYSDSEHYL) are compositionally biased toward basic and acidic residues. Positions 2063–2073 (DLSTISDTSPM) are enriched in polar residues. 2 stretches are compositionally biased toward basic and acidic residues: residues 2085-2102 (RRLD…ENQR) and 2143-2153 (PSKDRDQDRGR). Over residues 2154 to 2172 (PKDRKHRPHHHHHHHHHHP) the composition is skewed to basic residues. The segment covering 2173–2209 (PAPDRDRYAQERPDTGRARAREQRWSRSPSEGREHTT) has biased composition (basic and acidic residues). Over residues 2213–2231 (GSSSVSGSPAPSTSGTSTP) the composition is skewed to low complexity. Over residues 2289–2305 (EGPRPRGADYTEPDSPR) the composition is skewed to basic and acidic residues.

Belongs to the calcium channel alpha-1 subunit (TC 1.A.1.11) family. CACNA1A subfamily. Voltage-dependent calcium channels are multisubunit complexes, consisting of alpha-1, alpha-2, beta and delta subunits in a 1:1:1:1 ratio. The channel activity is directed by the pore-forming and voltage-sensitive alpha-1 subunit. In many cases, this subunit is sufficient to generate voltage-sensitive calcium channel activity. The auxiliary subunits beta and alpha-2/delta linked by a disulfide bridge regulate the channel activity. Interacts with CABP1. Interacts with the spider omega-agatoxin-IVA (AC P30288). Interacts with TSPOAP1. As to expression, brain specific; mainly found in the cerebellum, olfactory bulb, cerebral cortex, hippocampus, and inferior colliculus. In the hippocampus, expression occurs in pyramidal and granule neurons, as well as in interneurons. Purkinje cells contain predominantly P-type VSCC, the Q-type being a prominent calcium current in cerebellar granule cells.

The protein localises to the cell membrane. The catalysed reaction is Ca(2+)(in) = Ca(2+)(out). In terms of biological role, voltage-sensitive calcium channels (VSCC) mediate the entry of calcium ions into excitable cells and are also involved in a variety of calcium-dependent processes, including muscle contraction, hormone or neurotransmitter release, gene expression, cell motility, cell division and cell death. The isoform alpha-1A gives rise to P and/or Q-type calcium currents. P/Q-type calcium channels belong to the 'high-voltage activated' (HVA) group and are specifically blocked by the spider omega-agatoxin-IVA (AC P54282). They are however insensitive to dihydropyridines (DHP). The chain is Voltage-dependent P/Q-type calcium channel subunit alpha-1A from Mus musculus (Mouse).